A 192-amino-acid polypeptide reads, in one-letter code: FAD-linked sulfhydryl oxidase erv2 (192 aa).

Over 1 to 8 the chain is Cytoplasmic; that stretch reads MILNRRIQ. A helical; Signal-anchor transmembrane segment spans residues 9-29; it reads VILPTLLILSFIIWIFHSVMV. Residues 30 to 192 are Lumenal-facing; that stretch reads DKDWRLFMPE…VINEDHDYSG (163 aa). One can recognise an ERV/ALR sulfhydryl oxidase domain in the interval 61–162; it reads HDNNTNNLMV…TSCDGFNERY (102 aa). Trp-74, Cys-138, His-141, Asn-145, and Tyr-162 together coordinate FAD. Cysteines 138 and 155 form a disulfide.

It depends on FAD as a cofactor.

It is found in the endoplasmic reticulum membrane. The protein localises to the cytoplasm. The protein resides in the nucleus. It catalyses the reaction 2 R'C(R)SH + O2 = R'C(R)S-S(R)CR' + H2O2. FAD-dependent sulfhydryl oxidase that catalyzes disulfide bond formation in the endoplasmic reticulum lumen. This is FAD-linked sulfhydryl oxidase erv2 (erv2) from Schizosaccharomyces pombe (strain 972 / ATCC 24843) (Fission yeast).